A 663-amino-acid chain; its full sequence is MAU2 chromatid cohesion factor homolog (663 aa).

TPR repeat units lie at residues 455–488 (GGFYYVQGLHAFHKNSFHEAKRFLRETLKMANAE) and 495–528 (SCSLVLLSHVFLSIGNSKESMNMVTPAMQLASKI).

Belongs to the SCC4/mau-2 family. As to quaternary structure, interacts with Nipped-B to form the cohesin loading complex.

It is found in the nucleus. It localises to the nucleoplasm. Functionally, required for association of the cohesin complex with chromatin during interphase. Plays a role in sister chromatid cohesion and normal progression through prometaphase. The polypeptide is MAU2 chromatid cohesion factor homolog (Drosophila willistoni (Fruit fly)).